Reading from the N-terminus, the 283-residue chain is Adenosyl-chloride synthase (283 aa).

Substrate is bound by residues D11, 70–72 (YVY), and 128–131 (TWYG). Residue G131 coordinates chloride.

Belongs to the SAM hydrolase / SAM-dependent halogenase family. In terms of assembly, homotrimer.

The catalysed reaction is chloride + S-adenosyl-L-methionine = 5'-chloro-5'-deoxyadenosine + L-methionine. In terms of biological role, involved in the biosynthesis of the proteosome inhibitor salinosporamide A (SalA). Catalyzes the halogenation of S-adenosyl-L-methionine (SAM) with chloride to generate 5'-chloro-5'-deoxyadenosine (5'-CIDA) and L-methionine. It can also use bromide and iodide, producing halogenated 5'-deoxyadenosine (5'-XDA) and L-methionine, however no halogenase activity is detected in the presence of fluoride. The chain is Adenosyl-chloride synthase from Salinispora tropica (strain ATCC BAA-916 / DSM 44818 / JCM 13857 / NBRC 105044 / CNB-440).